Consider the following 172-residue polypeptide: Protein-export protein SecB (172 aa).

This sequence belongs to the SecB family. As to quaternary structure, homotetramer, a dimer of dimers. One homotetramer interacts with 1 SecA dimer.

It is found in the cytoplasm. Functionally, one of the proteins required for the normal export of preproteins out of the cell cytoplasm. It is a molecular chaperone that binds to a subset of precursor proteins, maintaining them in a translocation-competent state. It also specifically binds to its receptor SecA. This chain is Protein-export protein SecB, found in Bordetella avium (strain 197N).